A 195-amino-acid polypeptide reads, in one-letter code: Cytochrome b-245 light chain (195 aa).

The Cytoplasmic segment spans residues 2–7 (GQIEWA). Residues 8–30 (MWANEQALASGLILITGGIVATA) traverse the membrane as a helical segment. Residues 31–35 (GRFTQ) are Extracellular-facing. Residues 36 to 53 (WYFGAYSIVAGVFVCLLE) form a helical membrane-spanning segment. Residues 54-69 (YPRGKRKKGSTMERWG) are Cytoplasmic-facing. Residues 70 to 80 (QKYMTAVVKLF) lie within the membrane without spanning it. Residues 81-86 (GPFTRN) lie on the Cytoplasmic side of the membrane. A helical membrane pass occupies residues 87–104 (YYVRAVLHLLLSVPAGFL). Position 105 (L105) is a topological domain, extracellular. A helical transmembrane segment spans residues 106–126 (ATILGTACLAIASGIYLLAAV). The Cytoplasmic segment spans residues 127 to 195 (RGEQWTPIEP…NPIPVTDEVV (69 aa)). The segment at 134–195 (IEPKPRERPQ…NPIPVTDEVV (62 aa)) is disordered. Position 147 is a phosphothreonine (T147). K149 is covalently cross-linked (Glycyl lysine isopeptide (Lys-Gly) (interchain with G-Cter in ubiquitin)). A Phosphoserine modification is found at S168.

It belongs to the p22phox family. Component of the phagocyte NADPH oxidase core complex/cytochrome b558 complex, composed of CYBB (heavy chain (beta)) and CYBA (light chain (alpha)). Component of the phagocyte NADPH oxidase complex composed of an obligatory core heterodimer formed by the membrane proteins CYBA and CYBB and the cytosolic regulatory subunits NCF1/p47-phox, NCF2/p67-phox, NCF4/p40-phox and the small GTPase RAC1 or RAC2. Interacts with NCF1 (via SH3 domain). Interacts with SH3PXD2A. Interacts with DUOX1, DUOX2 and TPO. Interacts with NOX4; this interaction mediates superoxide generation. Interacts with calprotectin (S100A8/9). Interacts with GBP7. Interacts with NOXO1. Forms a heterodimer with NOX3 and is essential for activity and cell membrane localization of NOX3. Interacts with NOX1. Post-translationally, phosphorylation at Thr-147 enhances NADPH oxidase activity by promoting NCF1/p47-phox binding. Ubiquitinated at Lys-149 likely by RNF145.

It is found in the cell membrane. Its function is as follows. Subunit of NADPH oxidase complexes that is required for the NADPH oxidase activity that generates, in various cell types, superoxide from molecular oxygen utilizing NADPH as an electron donor. Subunit of the phagocyte NADPH oxidase complex that mediates the transfer of electrons from cytosolic NADPH to O2 to produce the superoxide anion (O2(-)). In the activated complex, electrons are first transferred from NADPH to flavin adenine dinucleotide (FAD) and subsequently transferred via two heme molecules to molecular oxygen, producing superoxide through an outer-sphere reaction. Activation of the NADPH oxidase complex is initiated by the assembly of cytosolic subunits of the NADPH oxidase complex with the core NADPH oxidase complex to form a complex at the plasma membrane or phagosomal membrane. This activation process is initiated by phosphorylation dependent binding of the cytosolic NCF1/p47-phox subunit to the C-terminus of CYBA/p22-phox. Aassociates with NOX3 to form a functional NADPH oxidase constitutively generating superoxide. The chain is Cytochrome b-245 light chain from Homo sapiens (Human).